A 384-amino-acid chain; its full sequence is 1-deoxy-D-xylulose 5-phosphate reductoisomerase (384 aa).

Residues threonine 10, glycine 11, serine 12, isoleucine 13, glycine 36, and asparagine 123 each coordinate NADPH. Residue lysine 124 participates in 1-deoxy-D-xylulose 5-phosphate binding. Residue glutamate 125 coordinates NADPH. Aspartate 149 lines the Mn(2+) pocket. Positions 150, 151, 175, and 198 each coordinate 1-deoxy-D-xylulose 5-phosphate. Glutamate 151 serves as a coordination point for Mn(2+). Glycine 204 contacts NADPH. 1-deoxy-D-xylulose 5-phosphate-binding residues include serine 211, asparagine 216, lysine 217, and glutamate 220. Glutamate 220 is a Mn(2+) binding site.

It belongs to the DXR family. Requires Mg(2+) as cofactor. It depends on Mn(2+) as a cofactor.

The enzyme catalyses 2-C-methyl-D-erythritol 4-phosphate + NADP(+) = 1-deoxy-D-xylulose 5-phosphate + NADPH + H(+). It functions in the pathway isoprenoid biosynthesis; isopentenyl diphosphate biosynthesis via DXP pathway; isopentenyl diphosphate from 1-deoxy-D-xylulose 5-phosphate: step 1/6. In terms of biological role, catalyzes the NADPH-dependent rearrangement and reduction of 1-deoxy-D-xylulose-5-phosphate (DXP) to 2-C-methyl-D-erythritol 4-phosphate (MEP). The protein is 1-deoxy-D-xylulose 5-phosphate reductoisomerase of Chlorobium phaeovibrioides (strain DSM 265 / 1930) (Prosthecochloris vibrioformis (strain DSM 265)).